The primary structure comprises 242 residues: Biosynthetic peptidoglycan transglycosylase (242 aa).

The chain crosses the membrane as a helical span at residues 19-39; that stretch reads LMVVLAVFWGGGIALFSVAPV.

It belongs to the glycosyltransferase 51 family.

The protein resides in the cell inner membrane. The catalysed reaction is [GlcNAc-(1-&gt;4)-Mur2Ac(oyl-L-Ala-gamma-D-Glu-L-Lys-D-Ala-D-Ala)](n)-di-trans,octa-cis-undecaprenyl diphosphate + beta-D-GlcNAc-(1-&gt;4)-Mur2Ac(oyl-L-Ala-gamma-D-Glu-L-Lys-D-Ala-D-Ala)-di-trans,octa-cis-undecaprenyl diphosphate = [GlcNAc-(1-&gt;4)-Mur2Ac(oyl-L-Ala-gamma-D-Glu-L-Lys-D-Ala-D-Ala)](n+1)-di-trans,octa-cis-undecaprenyl diphosphate + di-trans,octa-cis-undecaprenyl diphosphate + H(+). The protein operates within cell wall biogenesis; peptidoglycan biosynthesis. Functionally, peptidoglycan polymerase that catalyzes glycan chain elongation from lipid-linked precursors. In Shigella dysenteriae serotype 1 (strain Sd197), this protein is Biosynthetic peptidoglycan transglycosylase.